Consider the following 645-residue polypeptide: DEAD-box ATP-dependent RNA helicase 46 (645 aa).

Disordered stretches follow at residues 1-22 (MAATASAIRYAPEDPNLPKPWK) and 44-137 (YERP…AGNE). The region spanning 15 to 49 (PNLPKPWKGLVDSRTGYLYFWNPETNVTQYERPAS) is the WW domain. The span at 60–72 (VSSSVQTNQQSSS) shows a compositional bias: low complexity. The span at 77-91 (GKEDDKYGRGSDGPK) shows a compositional bias: basic and acidic residues. A compositionally biased stretch (low complexity) spans 108-136 (SSNDAASGLGNASSGGSSARGPPSSAAGN). The Q motif signature appears at 161–189 (MSFEATGLPNELLREVYSAGFSAPSPIQA). The Helicase ATP-binding domain occupies 192-366 (WPIAMQNRDI…ADLLVNPAQV (175 aa)). 205 to 212 (AKTGSGKT) provides a ligand contact to ATP. The DEAD box motif lies at 314–317 (DEAD). Residues 395 to 539 (RLEQILRSQE…KVPPQVREMA (145 aa)) form the Helicase C-terminal domain. Positions 532–645 (PPQVREMATR…FHEAMMMKNR (114 aa)) are disordered. Residues 556–597 (SSGGGGGRGGYGDSGYGGRGESGYGSRGDSGYGGRGDSGGRG) show a composition bias toward gly residues. Low complexity predominate over residues 598–608 (SWAPSRDSSGS). The span at 612–623 (GRERSRSPERFR) shows a compositional bias: basic and acidic residues. Residues 624–634 (GGPPSTSSPPR) are compositionally biased toward low complexity.

It belongs to the DEAD box helicase family. DDX5/DBP2 subfamily.

The catalysed reaction is ATP + H2O = ADP + phosphate + H(+). In Arabidopsis thaliana (Mouse-ear cress), this protein is DEAD-box ATP-dependent RNA helicase 46 (RH46).